A 352-amino-acid chain; its full sequence is N-terminal EF-hand calcium-binding protein 1 (352 aa).

Ser-4 carries the post-translational modification Phosphoserine. EF-hand domains lie at 26 to 61 (KGMSIFLDILRRADKNDDGKLSFEEFKAYFADGVLS) and 60 to 95 (LSGEELHELFHTIDTHNTNNLDTEELCEYFSQHLGE). Ca(2+) is bound by residues Asp-39, Asn-41, Asp-43, Lys-45, and Glu-50. Residues 135-163 (LLKETLNQLQSLQNSLECAMETTEEQTRQ) adopt a coiled-coil conformation. The interval 155–202 (ETTEEQTRQERQGPSKPEVLSIQWPGKRSSRRVQRHNSFSPNSPQFNV) is disordered. The span at 190–202 (HNSFSPNSPQFNV) shows a compositional bias: polar residues. A phosphoserine mark is found at Ser-192 and Ser-197. Positions 209–275 (EEDNQWMTQI…EEFQLALKHY (67 aa)) form a coiled coil. One can recognise an ABM domain in the interval 252-340 (MLVQRQMSVT…LETPELTSTM (89 aa)).

As to quaternary structure, interacts with STX1. May interact with CPNE6.

It is found in the cytoplasm. The chain is N-terminal EF-hand calcium-binding protein 1 (Necab1) from Rattus norvegicus (Rat).